The following is a 348-amino-acid chain: RNA 3'-terminal phosphate cyclase (348 aa).

ATP is bound by residues Gln-107 and 290-294 (HLADQ). His-316 (tele-AMP-histidine intermediate) is an active-site residue.

The protein belongs to the RNA 3'-terminal cyclase family. Type 1 subfamily.

It localises to the cytoplasm. It catalyses the reaction a 3'-end 3'-phospho-ribonucleotide-RNA + ATP = a 3'-end 2',3'-cyclophospho-ribonucleotide-RNA + AMP + diphosphate. Functionally, catalyzes the conversion of 3'-phosphate to a 2',3'-cyclic phosphodiester at the end of RNA. The mechanism of action of the enzyme occurs in 3 steps: (A) adenylation of the enzyme by ATP; (B) transfer of adenylate to an RNA-N3'P to produce RNA-N3'PP5'A; (C) and attack of the adjacent 2'-hydroxyl on the 3'-phosphorus in the diester linkage to produce the cyclic end product. The biological role of this enzyme is unknown but it is likely to function in some aspects of cellular RNA processing. In Nostoc sp. (strain PCC 7120 / SAG 25.82 / UTEX 2576), this protein is RNA 3'-terminal phosphate cyclase (rtcA).